Here is a 221-residue protein sequence, read N- to C-terminus: Very-long-chain (3R)-3-hydroxyacyl-CoA dehydratase PASTICCINO 2 (221 aa).

Residues 1–11 lie on the Cytoplasmic side of the membrane; it reads MAGFLSVVRRV. A helical membrane pass occupies residues 12–32; the sequence is YLTLYNWIVFAGWAQVLYLAI. The Lumenal segment spans residues 33-51; the sequence is TTLKETGYENVYDAIEKPL. Residues 52 to 70 form a helical membrane-spanning segment; the sequence is QLAQTAAVLEILHGLVGLV. Residues 71–76 are Cytoplasmic-facing; the sequence is RSPVSA. The helical transmembrane segment at 77 to 95 threads the bilayer; that stretch reads TLPQIGSRLFLTWGILYSF. Residues 96–100 are Lumenal-facing; sequence PEVRS. The helical transmembrane segment at 101 to 122 threads the bilayer; that stretch reads HFLVTSLVISWSITEIIRYSFF. The Cytoplasmic portion of the chain corresponds to 123-142; that stretch reads GFKEALGFAPSWHLWLRYSS. Residues 143-165 form a helical membrane-spanning segment; that stretch reads FLLLYPTGITSEVGLIYLALPHI. Residues tyrosine 147 and glutamate 154 contribute to the active site. The Lumenal portion of the chain corresponds to 166–184; sequence KTSEMYSVRMPNILNFSFD. Residues 185–204 traverse the membrane as a helical segment; that stretch reads FFYATILVLAIYVPGSPHMY. At 205-221 the chain is on the cytoplasmic side; the sequence is RYMLGQRKRALSKSKRE.

This sequence belongs to the very long-chain fatty acids dehydratase HACD family. In terms of assembly, interacts with CDKA-1; but only with the 'Tyr-15' phosphorylated protein. Interacts with PAS1. Part of the fatty acid elongase complex which contains a beta-ketoacyl-CoA synthase (KCS), a beta-ketoacyl-CoA reductase (KCR), a beta-hydroxyacyl-CoA dehydratase (HCD) and an enoyl-CoA reductase (ECR). As to expression, high expression in young seedlings, roots, root tips, flowers and young siliques. Lower levels in leaves and stems.

It is found in the endoplasmic reticulum membrane. The protein localises to the cytoplasm. It localises to the nucleus. It carries out the reaction a very-long-chain (3R)-3-hydroxyacyl-CoA = a very-long-chain (2E)-enoyl-CoA + H2O. It functions in the pathway lipid metabolism; fatty acid biosynthesis. Catalyzes the third of the four reactions of the long-chain fatty acids elongation cycle. This endoplasmic reticulum-bound enzymatic process, allows the addition of two carbons to the chain of long- and very long-chain fatty acids/VLCFAs per cycle. This enzyme catalyzes the dehydration of the 3-hydroxyacyl-CoA intermediate into trans-2,3-enoyl-CoA, within each cycle of fatty acid elongation. Thereby, it participates in the production of VLCFAs of different chain lengths that are involved in multiple biological processes as precursors of membrane lipids and lipid mediators. May be an anti-phosphatase that prevents CDKA-1 dephosphorylation and activation. Involved in the hormonal control of cell division and differentiation. Required for proliferation control of meristematic and non-meristematic cells. Negative regulator of the cell cycle. The polypeptide is Very-long-chain (3R)-3-hydroxyacyl-CoA dehydratase PASTICCINO 2 (PAS2) (Arabidopsis thaliana (Mouse-ear cress)).